A 248-amino-acid chain; its full sequence is Ribosomal RNA small subunit methyltransferase J (248 aa).

Residues 101 to 102 (RD), 117 to 118 (ER), 153 to 154 (SS), and Asp171 contribute to the S-adenosyl-L-methionine site.

The protein belongs to the methyltransferase superfamily. RsmJ family.

Its subcellular location is the cytoplasm. It carries out the reaction guanosine(1516) in 16S rRNA + S-adenosyl-L-methionine = N(2)-methylguanosine(1516) in 16S rRNA + S-adenosyl-L-homocysteine + H(+). Functionally, specifically methylates the guanosine in position 1516 of 16S rRNA. The polypeptide is Ribosomal RNA small subunit methyltransferase J (Pectobacterium atrosepticum (strain SCRI 1043 / ATCC BAA-672) (Erwinia carotovora subsp. atroseptica)).